We begin with the raw amino-acid sequence, 475 residues long: Serralysin G (475 aa).

The propeptide occupies 1 to 14; that stretch reads MALYGKKTDLSSAS. H186 provides a ligand contact to Zn(2+). Residue E187 is part of the active site. The Zn(2+) site is built by H190 and Y226. R261, G263, T265, D293, G295, G296, D298, E337, G342, G344, D346, N351, N355, G359, G360, A361, G362, D364, G368, G370, G371, D373, G377, G378, A379, G380, D382, D391, D398, and D408 together coordinate Ca(2+). Hemolysin-type calcium-binding repeat units lie at residues 340–357 and 358–375; these read IGGS…DNRI and DGGA…ADIL.

This sequence belongs to the peptidase M10B family. Ca(2+) serves as cofactor. It depends on Zn(2+) as a cofactor.

It localises to the secreted. The enzyme catalyses Preferential cleavage of bonds with hydrophobic residues in P1'.. The polypeptide is Serralysin G (prtG) (Dickeya chrysanthemi (Pectobacterium chrysanthemi)).